Reading from the N-terminus, the 201-residue chain is Recombination protein RecR (201 aa).

The C4-type zinc-finger motif lies at 60–75; it reads CKRCGSYAETEICEIC. Residues 83–178 enclose the Toprim domain; it reads HTFCVVEQPE…NVTRIAYGIT (96 aa).

This sequence belongs to the RecR family.

May play a role in DNA repair. It seems to be involved in an RecBC-independent recombinational process of DNA repair. It may act with RecF and RecO. The protein is Recombination protein RecR of Leptospira interrogans serogroup Icterohaemorrhagiae serovar copenhageni (strain Fiocruz L1-130).